A 339-amino-acid polypeptide reads, in one-letter code: DNA-directed RNA polymerase subunit alpha (339 aa).

The alpha N-terminal domain (alpha-NTD) stretch occupies residues M1–E233. The segment at K264–F339 is alpha C-terminal domain (alpha-CTD).

Belongs to the RNA polymerase alpha chain family. In terms of assembly, in plastids the minimal PEP RNA polymerase catalytic core is composed of four subunits: alpha, beta, beta', and beta''. When a (nuclear-encoded) sigma factor is associated with the core the holoenzyme is formed, which can initiate transcription.

Its subcellular location is the plastid. The protein resides in the chloroplast. It carries out the reaction RNA(n) + a ribonucleoside 5'-triphosphate = RNA(n+1) + diphosphate. Its function is as follows. DNA-dependent RNA polymerase catalyzes the transcription of DNA into RNA using the four ribonucleoside triphosphates as substrates. This chain is DNA-directed RNA polymerase subunit alpha, found in Crithopsis delileana.